A 441-amino-acid chain; its full sequence is ATP-dependent protease ATPase subunit HslU (441 aa).

ATP-binding positions include isoleucine 18, 60-65 (GVGKTE), aspartate 254, glutamate 319, and arginine 391.

Belongs to the ClpX chaperone family. HslU subfamily. A double ring-shaped homohexamer of HslV is capped on each side by a ring-shaped HslU homohexamer. The assembly of the HslU/HslV complex is dependent on binding of ATP.

It localises to the cytoplasm. Its function is as follows. ATPase subunit of a proteasome-like degradation complex; this subunit has chaperone activity. The binding of ATP and its subsequent hydrolysis by HslU are essential for unfolding of protein substrates subsequently hydrolyzed by HslV. HslU recognizes the N-terminal part of its protein substrates and unfolds these before they are guided to HslV for hydrolysis. The sequence is that of ATP-dependent protease ATPase subunit HslU from Shewanella halifaxensis (strain HAW-EB4).